Reading from the N-terminus, the 451-residue chain is Proton-coupled amino acid transporter-like protein acs (451 aa).

Over 1–48 (MNDDIKTVTVYPTTLELTTPTKSANGSNDDYDPHQHRELKNPTTNFQT) the chain is Cytoplasmic. A helical membrane pass occupies residues 49–69 (FAHFLKASVGTGVLAMPSAFA). The Extracellular portion of the chain corresponds to 70–80 (HAGYVNGTLLT). An N-linked (GlcNAc...) asparagine glycan is attached at Asn-75. Residues 81–101 (LIIGSLALYCLHILIKCMYIL) traverse the membrane as a helical segment. The Cytoplasmic segment spans residues 102–136 (CKRQRVPYVSFSQAMNLGLKQGPPWLRCLAPIAVP). The helical transmembrane segment at 137–157 (FVDGFLAFYHFGICCVYVVFI) threads the bilayer. The Extracellular segment spans residues 158 to 167 (AESIKQLVDE). The chain crosses the membrane as a helical span at residues 168-188 (YLVVWDVRIHMCIIIVPLLLI). Over 189 to 199 (YSIKNLKLLAP) the chain is Cytoplasmic. Residues 200–220 (FSSAANLLLLVGFGIILYYIF) form a helical membrane-spanning segment. At 221–237 (EELPPLSERDPFVAAGK) the chain is on the extracellular side. Residues 238–258 (LPTFFGTVLFALEAVGVILAI) traverse the membrane as a helical segment. At 259–272 (EENMATPKSFVGPC) the chain is on the cytoplasmic side. The helical transmembrane segment at 273–293 (GILNSGMSIVLGLYVLLGFFG) threads the bilayer. At 294–320 (YWKYGNESEGSITLNIPQSEIPAQVVK) the chain is on the extracellular side. The N-linked (GlcNAc...) asparagine glycan is linked to Asn-299. Residues 321–341 (VFFAITTWISYALQGYVTAHI) traverse the membrane as a helical segment. At 342–357 (LWDKYLAKRFKETRQT) the chain is on the cytoplasmic side. Residues 358-378 (FYELIFRAIIVLLTFGCAVAI) traverse the membrane as a helical segment. At 379-382 (PDLS) the chain is on the extracellular side. The chain crosses the membrane as a helical span at residues 383–403 (VFLSLVGSFCLSILGLIFPVL). At 404–420 (LQICVQYTEGYGPFRIK) the chain is on the cytoplasmic side. The chain crosses the membrane as a helical span at residues 421 to 441 (LIINLLLLCFGIFGGVVGTYV). Over 442-451 (SILDIIAVYK) the chain is Extracellular.

Belongs to the amino acid/polyamine transporter 2 family. In terms of tissue distribution, expressed in the proximal and distal regions of the midgut; expressed in enterocytes and progenitor cells. Expression increases in response to intestinal bacterial infection and spreads further into the midgut, eventually covering the entire midgut.

It localises to the cell membrane. The protein resides in the late endosome membrane. It is found in the lysosome membrane. The protein localises to the basal cell membrane. Amino acid transporter which has pH-dependent electrogenic transport activity for alanine, glycine and proline. Plays a role in positive regulation of growth by directly or indirectly modulating the effects of the TOR signaling pathway. Required in enterocytes for the efficient recovery of gut epithelium following the cytoplasmic purge response to bacterial infection. Acts cell-autonomously to promote the retrograde transport of amino acids into the intestinal epithelium. Acts non-cell-autonomously through the insulin signaling pathway to stimulate Myc expression and the release of amino acids from nutrient stores into the hemolymph. This is Proton-coupled amino acid transporter-like protein acs from Drosophila melanogaster (Fruit fly).